A 217-amino-acid polypeptide reads, in one-letter code: LexA repressor (217 aa).

Positions 28 to 48 (RAEIAAEFGFSSPNAAEEHLR) form a DNA-binding region, H-T-H motif. Residues Ser136 and Lys173 each act as for autocatalytic cleavage activity in the active site.

It belongs to the peptidase S24 family. In terms of assembly, homodimer.

The enzyme catalyses Hydrolysis of Ala-|-Gly bond in repressor LexA.. Its function is as follows. Represses a number of genes involved in the response to DNA damage (SOS response), including recA and lexA. In the presence of single-stranded DNA, RecA interacts with LexA causing an autocatalytic cleavage which disrupts the DNA-binding part of LexA, leading to derepression of the SOS regulon and eventually DNA repair. This is LexA repressor from Cupriavidus taiwanensis (strain DSM 17343 / BCRC 17206 / CCUG 44338 / CIP 107171 / LMG 19424 / R1) (Ralstonia taiwanensis (strain LMG 19424)).